The following is a 355-amino-acid chain: Protein RecA (355 aa).

67–74 is a binding site for ATP; the sequence is GPESSGKT.

This sequence belongs to the RecA family.

The protein localises to the cytoplasm. Functionally, can catalyze the hydrolysis of ATP in the presence of single-stranded DNA, the ATP-dependent uptake of single-stranded DNA by duplex DNA, and the ATP-dependent hybridization of homologous single-stranded DNAs. It interacts with LexA causing its activation and leading to its autocatalytic cleavage. This chain is Protein RecA, found in Shewanella amazonensis (strain ATCC BAA-1098 / SB2B).